Here is a 461-residue protein sequence, read N- to C-terminus: ATPSPPTLYGLCSCEQPNTDGSLAYGCLAMDYIPQITSVSWKKDNEPITTGLKTYPSVLNKKGTYTQSSQLTITESEVGSSKIYCEVRRGESVWIKEIPDCKGDKVHPTVILTQSSSEEITSRRFATVLCSIIDFHPESITVSWLKDGQHMESGFVTSPTCGVNGTFSATSRLTVPAREWFTNKVYTCQVSHQGVTQSRNITGSQVPCSCNDPVIKLLPPSIEQVLLEATVTLTCVVSNAPYGVNVSWTQEQKSLKSEIAVQPGEDADSVISTVNISTQAWLSGAEFYCVVNHQDLPTPLRASIHKEEVKDLREPSVSILLSPAEDVSAQRFLSLTCLVRGFFPREIFVKWTVNDKSVNPGNYKNTEVMAENDNSSYFIYSLLSIAAEEWASGASYSCVVGHEAIPLKIINRTVNKSSDSSDHIWIEDNEEESAIDNASTFIILFFLSIFYRAAVTLVKVK.

The interval 1-99 is CH1; the sequence is ATPSPPTLYG…GESVWIKEIP (99 aa). The CH2 stretch occupies residues 100-205; the sequence is DCKGDKVHPT…TQSRNITGSQ (106 aa). 8 N-linked (GlcNAc...) asparagine glycosylation sites follow: asparagine 164, asparagine 200, asparagine 245, asparagine 275, asparagine 374, asparagine 411, asparagine 415, and asparagine 437. A CH3 region spans residues 206 to 308; that stretch reads VPCSCNDPVI…PLRASIHKEE (103 aa). The segment at 309–418 is CH4; it reads VKDLREPSVS…IINRTVNKSS (110 aa). A helical membrane pass occupies residues 438 to 458; it reads ASTFIILFFLSIFYRAAVTLV.

The protein localises to the cell membrane. In Heterodontus francisci (Horn shark), this protein is Ig heavy chain C region, membrane-bound form.